A 345-amino-acid polypeptide reads, in one-letter code: Phosphate acyltransferase (345 aa).

The protein belongs to the PlsX family. Homodimer. Probably interacts with PlsY.

It is found in the cytoplasm. The catalysed reaction is a fatty acyl-[ACP] + phosphate = an acyl phosphate + holo-[ACP]. The protein operates within lipid metabolism; phospholipid metabolism. Functionally, catalyzes the reversible formation of acyl-phosphate (acyl-PO(4)) from acyl-[acyl-carrier-protein] (acyl-ACP). This enzyme utilizes acyl-ACP as fatty acyl donor, but not acyl-CoA. This Proteus mirabilis (strain HI4320) protein is Phosphate acyltransferase.